We begin with the raw amino-acid sequence, 179 residues long: Large ribosomal subunit protein bL25 (179 aa).

It belongs to the bacterial ribosomal protein bL25 family. CTC subfamily. In terms of assembly, part of the 50S ribosomal subunit; part of the 5S rRNA/L5/L18/L25 subcomplex. Contacts the 5S rRNA. Binds to the 5S rRNA independently of L5 and L18.

This is one of the proteins that binds to the 5S RNA in the ribosome where it forms part of the central protuberance. The chain is Large ribosomal subunit protein bL25 from Desulfitobacterium hafniense (strain DSM 10664 / DCB-2).